The sequence spans 515 residues: Zinc-binding protein AdcA (515 aa).

A signal peptide spans 1–28; sequence MKKKILLMMSLISVFFAWQLTQAKQVLA. Histidine 66 lines the Zn(2+) pocket. Residues 126–148 form a disordered region; it reads HHHEEADKKHEHNKHSEEGHNHA. The his-rich loop stretch occupies residues 129 to 148; it reads EEADKKHEHNKHSEEGHNHA. Residues histidine 152, histidine 216, and glutamate 291 each contribute to the Zn(2+) site.

The protein belongs to the bacterial solute-binding protein 9 family.

In terms of biological role, part of the ATP-binding cassette (ABC) transport system AdcABC involved in zinc import. Binds zinc with high affinity and specificity and delivers it to the membrane permease for translocation into the cytoplasm. This is Zinc-binding protein AdcA (adcA) from Streptococcus pyogenes serotype M3 (strain ATCC BAA-595 / MGAS315).